A 124-amino-acid chain; its full sequence is Large ribosomal subunit protein bL12 (124 aa).

The protein belongs to the bacterial ribosomal protein bL12 family. Homodimer. Part of the ribosomal stalk of the 50S ribosomal subunit. Forms a multimeric L10(L12)X complex, where L10 forms an elongated spine to which 2 to 4 L12 dimers bind in a sequential fashion. Binds GTP-bound translation factors.

In terms of biological role, forms part of the ribosomal stalk which helps the ribosome interact with GTP-bound translation factors. Is thus essential for accurate translation. This is Large ribosomal subunit protein bL12 from Desulforamulus reducens (strain ATCC BAA-1160 / DSM 100696 / MI-1) (Desulfotomaculum reducens).